The following is a 132-amino-acid chain: Large ribosomal subunit protein uL22 (132 aa).

It belongs to the universal ribosomal protein uL22 family. Part of the 50S ribosomal subunit.

Its function is as follows. This protein binds specifically to 23S rRNA; its binding is stimulated by other ribosomal proteins, e.g. L4, L17, and L20. It is important during the early stages of 50S assembly. It makes multiple contacts with different domains of the 23S rRNA in the assembled 50S subunit and ribosome. The globular domain of the protein is located near the polypeptide exit tunnel on the outside of the subunit, while an extended beta-hairpin is found that lines the wall of the exit tunnel in the center of the 70S ribosome. The polypeptide is Large ribosomal subunit protein uL22 (Pelagibacter ubique (strain HTCC1062)).